The following is a 349-amino-acid chain: Very-long-chain 3-oxoacyl-CoA reductase (349 aa).

A helical transmembrane segment spans residues 29-49 (AASLVFATGGLFLLSRGLSFL). NADP(+) is bound by residues Leu74, Asp129, Asp137, Asn156, Tyr223, Lys227, Val256, and Ser258. Catalysis depends on Tyr223, which acts as the Proton donor. Lys227 (lowers pKa of active site Tyr) is an active-site residue.

This sequence belongs to the short-chain dehydrogenases/reductases (SDR) family.

It is found in the endoplasmic reticulum membrane. It carries out the reaction a very-long-chain (3R)-3-hydroxyacyl-CoA + NADP(+) = a very-long-chain 3-oxoacyl-CoA + NADPH + H(+). The protein operates within lipid metabolism; fatty acid biosynthesis. In terms of biological role, component of the microsomal membrane bound fatty acid elongation system, which produces the 26-carbon very long-chain fatty acids (VLCFA) from palmitate. Catalyzes the reduction of the 3-ketoacyl-CoA intermediate that is formed in each cycle of fatty acid elongation. VLCFAs serve as precursors for ceramide and sphingolipids. In Coccidioides immitis (strain RS) (Valley fever fungus), this protein is Very-long-chain 3-oxoacyl-CoA reductase.